An 808-amino-acid polypeptide reads, in one-letter code: Transcription activator of gluconeogenesis PAAG_01030 (808 aa).

The tract at residues 1-90 (MTSSVRNGSP…SAKDPLRPRR (90 aa)) is disordered. The segment covering 69–83 (STSSTAASANNASAK) has biased composition (low complexity). The segment at residues 97-125 (CFACQRAHLTCGDERPCQRCIKRGLQDTC) is a DNA-binding region (zn(2)-C6 fungal-type). Residues 158-170 (AARNKVNSNSQQR) show a composition bias toward polar residues. Disordered regions lie at residues 158-203 (AARN…FSTP), 236-285 (SAFQ…YGST), 322-387 (GAGD…IYNQ), 442-461 (PPTN…STPS), and 598-629 (TGGS…DNQS). Over residues 171-188 (NGTNSNSDNNSTNTNSNN) the composition is skewed to low complexity. Composition is skewed to polar residues over residues 189–203 (KPSH…FSTP), 248–279 (FDLS…SQNP), 339–359 (GRSS…NQSP), and 377–387 (GPTNPRNIYNQ). 2 stretches are compositionally biased toward low complexity: residues 442–451 (PPTNTQHQQQ) and 598–619 (TGGS…SRNS). Residues 620 to 629 (ATTTVMDNQS) show a composition bias toward polar residues.

Belongs to the ERT1/acuK family.

It is found in the nucleus. In terms of biological role, transcription factor which regulates nonfermentable carbon utilization. Activator of gluconeogenetic genes. This is Transcription activator of gluconeogenesis PAAG_01030 from Paracoccidioides lutzii (strain ATCC MYA-826 / Pb01) (Paracoccidioides brasiliensis).